A 110-amino-acid polypeptide reads, in one-letter code: Thioredoxin (110 aa).

Residues 3 to 108 (KPIEVHDSDF…YREIFDKVLA (106 aa)) form the Thioredoxin domain. Residues Cys32 and Cys35 are joined by a disulfide bond. At Lys105 the chain carries N6,N6-dimethyllysine; alternate. An N6-methyllysine; alternate modification is found at Lys105.

Its function is as follows. Participates in various redox reactions through the reversible oxidation of its active center dithiol to a disulfide and catalyzes dithiol-disulfide exchange reactions. The chain is Thioredoxin (trxA) from Chloroflexus aurantiacus (strain ATCC 29366 / DSM 635 / J-10-fl).